The sequence spans 30 residues: Cytochrome c3, 50 kDa (30 aa).

Monomer. In terms of processing, binds 4 heme groups per subunit.

The protein localises to the periplasm. Functionally, participates in sulfate respiration coupled with phosphorylation by transferring electrons from the enzyme dehydrogenase to ferredoxin. In Desulfuromonas acetoxidans (Chloropseudomonas ethylica), this protein is Cytochrome c3, 50 kDa.